Consider the following 42-residue polypeptide: Large ribosomal subunit protein bL34c (42 aa).

This sequence belongs to the bacterial ribosomal protein bL34 family.

It is found in the plastid. The protein localises to the chloroplast. The protein is Large ribosomal subunit protein bL34c (rpl34) of Olisthodiscus luteus (Marine phytoflagellate).